We begin with the raw amino-acid sequence, 693 residues long: Polyribonucleotide nucleotidyltransferase (693 aa).

2 residues coordinate Mg(2+): D487 and D493. The 60-residue stretch at 554–613 folds into the KH domain; that stretch reads PRIYTIKINPEKIKDVIGKGGSIIRMLTEETGTVIEIKDDGIVKISAINGEKAKYAIKRI. Residues 623-691 form the S1 motif domain; the sequence is GKIYSGKVTR…RQGRIRLSMK (69 aa).

The protein belongs to the polyribonucleotide nucleotidyltransferase family. Component of the RNA degradosome, which is a multiprotein complex involved in RNA processing and mRNA degradation. Mg(2+) is required as a cofactor.

The protein resides in the cytoplasm. It catalyses the reaction RNA(n+1) + phosphate = RNA(n) + a ribonucleoside 5'-diphosphate. Involved in mRNA degradation. Catalyzes the phosphorolysis of single-stranded polyribonucleotides processively in the 3'- to 5'-direction. This is Polyribonucleotide nucleotidyltransferase from Buchnera aphidicola subsp. Cinara cedri (strain Cc).